We begin with the raw amino-acid sequence, 178 residues long: Large ribosomal subunit protein uL6 (178 aa).

It belongs to the universal ribosomal protein uL6 family. As to quaternary structure, part of the 50S ribosomal subunit.

Functionally, this protein binds to the 23S rRNA, and is important in its secondary structure. It is located near the subunit interface in the base of the L7/L12 stalk, and near the tRNA binding site of the peptidyltransferase center. This Staphylococcus aureus (strain Mu3 / ATCC 700698) protein is Large ribosomal subunit protein uL6.